The sequence spans 257 residues: NAD-capped RNA hydrolase NudC (257 aa).

Substrate is bound at residue R69. Zn(2+) contacts are provided by C98 and C101. E111 lines the substrate pocket. C116 and C119 together coordinate Zn(2+). Y124 serves as a coordination point for substrate. The 124-residue stretch at 125 to 248 (PQIAPCIIVA…TVARRLIEDT (124 aa)) folds into the Nudix hydrolase domain. Residues A158, E174, and E178 each coordinate a divalent metal cation. The short motif at 159–180 (GFVEVGETLEQAVAREVMEESG) is the Nudix box element. 192 to 199 (QPWPFPQS) serves as a coordination point for substrate. E219 is a binding site for a divalent metal cation. A substrate-binding site is contributed by A241.

This sequence belongs to the Nudix hydrolase family. NudC subfamily. Homodimer. Requires Mg(2+) as cofactor. Mn(2+) serves as cofactor. The cofactor is Zn(2+).

The catalysed reaction is a 5'-end NAD(+)-phospho-ribonucleoside in mRNA + H2O = a 5'-end phospho-adenosine-phospho-ribonucleoside in mRNA + beta-nicotinamide D-ribonucleotide + 2 H(+). The enzyme catalyses NAD(+) + H2O = beta-nicotinamide D-ribonucleotide + AMP + 2 H(+). It carries out the reaction NADH + H2O = reduced beta-nicotinamide D-ribonucleotide + AMP + 2 H(+). Its function is as follows. mRNA decapping enzyme that specifically removes the nicotinamide adenine dinucleotide (NAD) cap from a subset of mRNAs by hydrolyzing the diphosphate linkage to produce nicotinamide mononucleotide (NMN) and 5' monophosphate mRNA. The NAD-cap is present at the 5'-end of some mRNAs and stabilizes RNA against 5'-processing. Has preference for mRNAs with a 5'-end purine. Catalyzes the hydrolysis of a broad range of dinucleotide pyrophosphates. The protein is NAD-capped RNA hydrolase NudC of Klebsiella pneumoniae (strain 342).